The chain runs to 101 residues: ATP synthase subunit f, mitochondrial (101 aa).

Residues 1-6 (MIFKRA) constitute a mitochondrion transit peptide.

Belongs to the ATPase F chain family. In terms of assembly, F-type ATPases have 2 components, CF(1) - the catalytic core - and CF(0) - the membrane proton channel. In yeast, the dimeric form of ATP synthase consists of 17 polypeptides: alpha, beta, gamma, delta, epsilon, 4 (B), 5 (OSCP), 6 (A), 8, 9 (C), d, E (Tim11), f, g, h, i/j and k.

The protein resides in the mitochondrion. It is found in the mitochondrion inner membrane. Its function is as follows. Mitochondrial membrane ATP synthase (F(1)F(0) ATP synthase or Complex V) produces ATP from ADP in the presence of a proton gradient across the membrane which is generated by electron transport complexes of the respiratory chain. F-type ATPases consist of two structural domains, F(1) - containing the extramembraneous catalytic core and F(0) - containing the membrane proton channel, linked together by a central stalk and a peripheral stalk. During catalysis, ATP synthesis in the catalytic domain of F(1) is coupled via a rotary mechanism of the central stalk subunits to proton translocation. Part of the complex F(0) domain. Minor subunit located with subunit a in the membrane. This chain is ATP synthase subunit f, mitochondrial (ATP17), found in Saccharomyces cerevisiae (strain ATCC 204508 / S288c) (Baker's yeast).